A 372-amino-acid chain; its full sequence is Ubl carboxyl-terminal hydrolase 18 (372 aa).

The disordered stretch occupies residues 19–45 (SSQSPADLEEKKEEDSNMKREQPRERP). The span at 26 to 45 (LEEKKEEDSNMKREQPRERP) shows a compositional bias: basic and acidic residues. Residues 36-51 (MKREQPRERPRAWDYP) form a mediates interaction with IFNAR2 region. A mediates interaction with STAT2 region spans residues 51 to 112 (PHGLVGLHNI…MLLLLEKMQD (62 aa)). The 316-residue stretch at 55-370 (VGLHNIGQTC…TAYLLVYMKM (316 aa)) folds into the USP domain. Catalysis depends on cysteine 64, which acts as the Nucleophile. Residues 303-312 (ELFAVIAHVG) form a mediates interaction with STAT2 and necessary for the negative regulation of the type I IFN signaling pathway region. Positions 313-372 (MADSGHYCVYIRNAVDGKWFCFNDSNICLVSWEDIQCTYGNPNYHWQETAYLLVYMKMEC) are mediates interaction with IFNAR2. The Proton acceptor role is filled by histidine 318.

This sequence belongs to the peptidase C19 family. In terms of assembly, interacts with STAT2; the interaction is direct. Interacts with IFNAR2; indirectly via STAT2, it negatively regulates the assembly of the ternary interferon-IFNAR1-IFNAR2 complex and inhibits type I interferon signaling. Interacts with STING1. Interacts with USP20.

It is found in the cytoplasm. The protein resides in the nucleus. The catalysed reaction is Thiol-dependent hydrolysis of ester, thioester, amide, peptide and isopeptide bonds formed by the C-terminal Gly of ubiquitin (a 76-residue protein attached to proteins as an intracellular targeting signal).. Its function is as follows. Interferon-induced ISG15-specific protease that plays a crucial role for maintaining a proper balance of ISG15-conjugated proteins in cells. Regulates protein ISGylation by efficiently cleaving ISG15 conjugates linked via isopeptide bonds. Regulates T-cell activation and T-helper 17 (Th17) cell differentiation by deubiquitinating TAK1, likely to keep TAK1-TAB complexes in steady conditions. In turn, restricts activation of NF-kappa-B, NFAT, and JNK as well as expression of IL2 in T-cells after TCR activation. Acts as a molecular adapter with USP20 to promote innate antiviral response through deubiquitinating STING1. Involved also in the negative regulation of the inflammatory response triggered by type I interferon. Upon recruitment by STAT2 to the type I interferon receptor subunit IFNAR2 interferes with the assembly of the ternary interferon-IFNAR1-IFNAR2 complex and acts as a negative regulator of the type I interferon signaling pathway. In terms of biological role, has enzymatic activity similar to isoform 1 and interferes with type I interferon signaling. Major deISGylation enzyme for nuclear proteins. This Homo sapiens (Human) protein is Ubl carboxyl-terminal hydrolase 18 (USP18).